Consider the following 347-residue polypeptide: MAQSRDGGNPFAEPSELDNPFQDPAVIQHRPSRQYATLDVYNPFETREPPPAYEPPAPAPLPPPSAPSLQPSRKLSPTEPKNYGSYSTQASAAAATAELLKKQEELNRKAEELDRRERELQHAALGGTATRQNNWPPLPSFCPVQPCFFQDISMEIPQEFQKTVSTMYYLWMCSTLALLLNFLACLASFCVETNNGAGFGLSILWVLLFTPCSFVCWYRPMYKAFRSDSSFNFFVFFFIFFVQDVLFVLQAIGIPGWGFSGWISALVVPKGNTAVSVLMLLVALLFTGIAVLGIVMLKRIHSLYRRTGASFQKAQQEFAAGVFSNPAVRTAAANAAAGAAENAFRAP.

Residues 1-88 (MAQSRDGGNP…EPKNYGSYST (88 aa)) form a disordered region. Residues 1–170 (MAQSRDGGNP…QKTVSTMYYL (170 aa)) are Cytoplasmic-facing. Residue Ser-32 is modified to Phosphoserine. Thr-37 carries the phosphothreonine modification. 2 positions are modified to phosphotyrosine: Tyr-41 and Tyr-53. Residues 49 to 66 (PPPAYEPPAPAPLPPPSA) show a composition bias toward pro residues. Phosphoserine occurs at positions 72 and 76. Tyr-83 carries the phosphotyrosine modification. Ser-85 is subject to Phosphoserine. 4 consecutive transmembrane segments (helical) span residues 171–191 (WMCS…SFCV), 197–217 (AGFG…FVCW), 247–267 (FVLQ…SALV), and 277–297 (VLML…IVML). Over 298–347 (KRIHSLYRRTGASFQKAQQEFAAGVFSNPAVRTAAANAAAGAAENAFRAP) the chain is Cytoplasmic. Lys-313 is covalently cross-linked (Glycyl lysine isopeptide (Lys-Gly) (interchain with G-Cter in SUMO1)).

It belongs to the SCAMP family. As to quaternary structure, interacts with NEDD4, NEDD4L and TSG101. Interacts with RNF126. Monoubiquitinated. Widely expressed, with highest expression in heart and skeletal muscle.

Its subcellular location is the membrane. Functions in post-Golgi recycling pathways. Acts as a recycling carrier to the cell surface. This chain is Secretory carrier-associated membrane protein 3 (SCAMP3), found in Homo sapiens (Human).